Here is a 322-residue protein sequence, read N- to C-terminus: Labrum-interacting protein from saliva LIPS-2 (322 aa).

Residues 1-20 form the signal peptide; it reads MKTSLPIVVLLTAVISGVHP. An intrachain disulfide couples cysteine 27 to cysteine 62. Asparagine 168 and asparagine 175 each carry an N-linked (GlcNAc...) asparagine glycan. An intrachain disulfide couples cysteine 249 to cysteine 295.

As to quaternary structure, monomer in solution. Interacts (via the N-terminal domain) with cuticular protein Cp19 (via the C-terminus). In terms of processing, proteolytically cleaved by human mast cell tryptase and chymase. Glycosylated. In terms of tissue distribution, female salivary gland (at protein level). Female saliva (at protein level).

The protein localises to the secreted. Functionally, salivary protein that promotes mosquito blood feeding on the vertebrate host by inducing morphological changes in the mosquito labrum. Interacts with the mosquito labrum end tip and triggers salivation and probing. Modulates enzymatic activities of human tryptase and chymase. This is Labrum-interacting protein from saliva LIPS-2 from Aedes albopictus (Asian tiger mosquito).